The sequence spans 237 residues: uncharacterized protein (237 aa).

One can recognise a Response regulatory domain in the interval 3 to 116 (SALLIDDERF…RLAKTVQRLL (114 aa)). Residue Asp54 is modified to 4-aspartylphosphate. An HTH LytTR-type domain is found at 135–236 (IPCTGLNRIV…LKELKEMLGF (102 aa)).

This is an uncharacterized protein from Vibrio cholerae serotype O1 (strain ATCC 39315 / El Tor Inaba N16961).